Consider the following 90-residue polypeptide: Neuropeptide-like 3 (90 aa).

Positions 1–16 (MFKLCVFVALLSLAAA) are cleaved as a signal peptide. Propeptides lie at residues 17-54 (APAP…LAPQ) and 67-79 (AITQ…LLIK). I89 is modified (isoleucine amide).

It localises to the secreted. In Drosophila melanogaster (Fruit fly), this protein is Neuropeptide-like 3 (Nplp3).